A 265-amino-acid chain; its full sequence is Phosphonates import ATP-binding protein PhnC (265 aa).

The ABC transporter domain maps to 18–262 (LVVEHLRKEY…HLKQIYGGEE (245 aa)). 51 to 58 (GPSGTGKS) is an ATP binding site.

The protein belongs to the ABC transporter superfamily. Phosphonates importer (TC 3.A.1.9.1) family. As to quaternary structure, the complex is composed of two ATP-binding proteins (PhnC), two transmembrane proteins (PhnE) and a solute-binding protein (PhnD).

It is found in the cell inner membrane. The enzyme catalyses phosphonate(out) + ATP + H2O = phosphonate(in) + ADP + phosphate + H(+). In terms of biological role, part of the ABC transporter complex PhnCDE involved in phosphonates import. Responsible for energy coupling to the transport system. The polypeptide is Phosphonates import ATP-binding protein PhnC (Nitratidesulfovibrio vulgaris (strain ATCC 29579 / DSM 644 / CCUG 34227 / NCIMB 8303 / VKM B-1760 / Hildenborough) (Desulfovibrio vulgaris)).